The following is a 211-amino-acid chain: Adenylate kinase (211 aa).

ATP is bound at residue 10–15 (GSGKGT). Residues 30 to 59 (STGDLFRENILNSTALGQEIKKIVERGELV) are NMP. AMP-binding positions include Thr31, Arg36, 57–59 (ELV), 85–88 (GFPR), and Gln92. Positions 121–158 (GRRICKSCNNIFNIYTLTTKKNGICDVCGGDLYQREDD) are LID. ATP is bound at residue Arg122. Residues Cys125 and Cys128 each contribute to the Zn(2+) site. 131–132 (IF) provides a ligand contact to ATP. Residues Cys145 and Cys148 each coordinate Zn(2+). 2 residues coordinate AMP: Arg155 and Arg166. An ATP-binding site is contributed by Val194.

It belongs to the adenylate kinase family. Monomer.

It localises to the cytoplasm. It catalyses the reaction AMP + ATP = 2 ADP. It participates in purine metabolism; AMP biosynthesis via salvage pathway; AMP from ADP: step 1/1. Its function is as follows. Catalyzes the reversible transfer of the terminal phosphate group between ATP and AMP. Plays an important role in cellular energy homeostasis and in adenine nucleotide metabolism. This chain is Adenylate kinase, found in Borreliella burgdorferi (strain ATCC 35210 / DSM 4680 / CIP 102532 / B31) (Borrelia burgdorferi).